Consider the following 545-residue polypeptide: MAKRIIYNEQARRALERGIDILAESVAVTLGPKGRNVVLEKKFGAPQIINDGVTIAKEIELEDHIENTGVALIRQAASKTNDAAGDGTTTATVLAHAMVKAGLRNVAAGANAITLKKGIDKATDFLVKKIQEQAKPISDSNAIAQCGTIAAGNDEEVGQMIADAMDKVGKEGVISLEEGKSMETELEVTEGMRFDKGYISPYFATDTERMEAVLDEPYILLTDKKIGLVQDLVPVLEQIAKTGKPLLIVAEDIEKEALATLVVNRLRGVLNVAAVKAPGFGDRRKAMLEDMAVLTNGQLITEDAGLKLENATLDMLGTSRRVTINKDTTTIVAEGNEAAVQARCEQIKKQMDETDSTYDKEKLQERLAKLAGGVAVVKVGAATETEMKDKKLRLEDAINATKAAVEEGIVPGGGTTLAHLASEVHSWAASSLSGEELIGANIVEAALTAPLMRIAENAGANGAVIAEHVKSKPLNDGYNAASGEYVDMLSAGIVDPAKVTRSGLQNASSIAGMVLTTECIVADLPEKKDVASGGAGGGMGGDFDY.

Residues 29–32, 86–90, Gly-413, 479–481, and Asp-495 contribute to the ATP site; these read TLGP, DGTTT, and NAA.

The protein belongs to the chaperonin (HSP60) family. As to quaternary structure, forms a cylinder of 14 subunits composed of two heptameric rings stacked back-to-back. Interacts with the co-chaperonin GroES.

It is found in the cytoplasm. The catalysed reaction is ATP + H2O + a folded polypeptide = ADP + phosphate + an unfolded polypeptide.. Together with its co-chaperonin GroES, plays an essential role in assisting protein folding. The GroEL-GroES system forms a nano-cage that allows encapsulation of the non-native substrate proteins and provides a physical environment optimized to promote and accelerate protein folding. This is Chaperonin GroEL 2 from Prochlorococcus marinus (strain SARG / CCMP1375 / SS120).